The chain runs to 703 residues: Calpain-8 (703 aa).

Residues 45–344 (LFKDPEFPAC…YSRLEICNLS (300 aa)) form the Calpain catalytic domain. Catalysis depends on residues cysteine 105, histidine 262, and asparagine 286. The domain III stretch occupies residues 355-512 (KWNLVLFNGR…VFSEKKAKAL (158 aa)). The linker stretch occupies residues 513-531 (EIGDTVSGHPHEPHPRDMD). EF-hand domains follow at residues 532 to 566 (EEDE…VLSK), 575 to 608 (FNIN…LKIR), 605 to 640 (LKIR…AGFT), and 670 to 703 (IRLE…CVLV). Positions 532–703 (EEDEHVRSLF…LAEWLCCVLV (172 aa)) are domain IV. 9 residues coordinate Ca(2+): aspartate 588, aspartate 590, threonine 592, serine 594, glutamate 599, aspartate 618, asparagine 620, threonine 624, and glutamate 629.

The protein belongs to the peptidase C2 family. Monomer and homooligomer. Interacts with COPS1/GPS1, COPB1, EYA2, NME2, NME4 and TOMM70. It depends on Ca(2+) as a cofactor. Undergoes autolytic cleavage between Ala-5 and Ala-6 which gives rise to fragments extending from Ala-6 to the C-terminus, Ala-6 to the EF-hand 2 domain and from Ala-6 to the beginning of domain III. Predominantly expressed in the stomach. Localizes strictly to the surface mucus cells in the gastric epithelium and the mucus-secreting goblet cells in the duodenum. Detected in the pituitary after estrogen stimulation.

Its subcellular location is the cytoplasm. It is found in the golgi apparatus. The catalysed reaction is Broad endopeptidase specificity.. Its function is as follows. Calcium-regulated non-lysosomal thiol-protease. Involved in membrane trafficking in the gastric surface mucus cells (pit cells) and may involve the membrane trafficking of mucus cells via interactions with coat protein. Proteolytically cleaves the beta-subunit of coatomer complex. In Rattus norvegicus (Rat), this protein is Calpain-8 (Capn8).